Consider the following 361-residue polypeptide: Chorismate synthase (361 aa).

Over residues 38–49 (EKDMQHDLDRRR) the composition is skewed to basic and acidic residues. The disordered stretch occupies residues 38–58 (EKDMQHDLDRRRPGTSKYTTQ). NADP(+) is bound at residue Arg-48. Residues 125–127 (RSS), 238–239 (NA), Gly-278, 293–297 (KPTSS), and Arg-319 each bind FMN.

Belongs to the chorismate synthase family. Homotetramer. FMNH2 serves as cofactor.

It carries out the reaction 5-O-(1-carboxyvinyl)-3-phosphoshikimate = chorismate + phosphate. It functions in the pathway metabolic intermediate biosynthesis; chorismate biosynthesis; chorismate from D-erythrose 4-phosphate and phosphoenolpyruvate: step 7/7. Its function is as follows. Catalyzes the anti-1,4-elimination of the C-3 phosphate and the C-6 proR hydrogen from 5-enolpyruvylshikimate-3-phosphate (EPSP) to yield chorismate, which is the branch point compound that serves as the starting substrate for the three terminal pathways of aromatic amino acid biosynthesis. This reaction introduces a second double bond into the aromatic ring system. This Photobacterium profundum (strain SS9) protein is Chorismate synthase.